Reading from the N-terminus, the 372-residue chain is L-selectin (372 aa).

Residues 1-28 (MIFPWKCQSTQRDLWNIFKLWGWTMLCC) form the signal peptide. A propeptide spanning residues 29–38 (DFLAHHGTDC) is cleaved from the precursor. Over 39–332 (WTYHYSEKPM…FSMIKEGDYN (294 aa)) the chain is Extracellular. The 101-residue stretch at 55–155 (RFCRDNYTDL…ACHKLKAALC (101 aa)) folds into the C-type lectin domain. Intrachain disulfides connect Cys57–Cys155, Cys128–Cys147, Cys128–Cys160, Cys160–Cys171, Cys165–Cys180, Cys182–Cys191, Cys197–Cys241, Cys227–Cys254, Cys259–Cys303, and Cys289–Cys316. N-linked (GlcNAc...) asparagine glycosylation is found at Asn60 and Asn104. Ca(2+) contacts are provided by Glu118, Asn120, Glu126, Asn143, and Asp144. In terms of domain architecture, EGF-like spans 156–192 (YTASCQPWSCSGHGECVEIINNYTCNCDVGYYGPQCQ). Residue Asn177 is glycosylated (N-linked (GlcNAc...) asparagine). Sushi domains are found at residues 195–256 (IQCE…TCQV) and 257–318 (IQCE…ICQK). N-linked (GlcNAc...) asparagine glycosylation is found at Asn216, Asn232, Asn246, and Asn271. The helical transmembrane segment at 333–355 (PLFIPVAVMVTAFSGLAFIIWLA) threads the bilayer. The Cytoplasmic segment spans residues 356-372 (RRLKKGKKSKRSMDDPY).

Belongs to the selectin/LECAM family. In terms of assembly, interaction with SELPLG/PSGL1 and PODXL2 is required for promoting recruitment and rolling of leukocytes. This interaction is dependent on the sialyl Lewis X glycan modification of SELPLG and PODXL2, and tyrosine sulfation modifications of SELPLG. Sulfation on 'Tyr-51' of SELPLG is important for L-selectin binding. Post-translationally, N-glycosylated.

The protein resides in the cell membrane. In terms of biological role, calcium-dependent lectin that mediates cell adhesion by binding to glycoproteins on neighboring cells. Mediates the adherence of lymphocytes to endothelial cells of high endothelial venules in peripheral lymph nodes. Promotes initial tethering and rolling of leukocytes in endothelia. This is L-selectin (SELL) from Pan troglodytes (Chimpanzee).